Consider the following 389-residue polypeptide: Chalcone synthase 2 (389 aa).

The active site involves Cys164.

This sequence belongs to the thiolase-like superfamily. Chalcone/stilbene synthases family.

The catalysed reaction is (E)-4-coumaroyl-CoA + 3 malonyl-CoA + 3 H(+) = 2',4,4',6'-tetrahydroxychalcone + 3 CO2 + 4 CoA. Its pathway is secondary metabolite biosynthesis; flavonoid biosynthesis. Functionally, the primary product of this enzyme is 4,2',4',6'-tetrahydroxychalcone (also termed naringenin-chalcone or chalcone) which can under specific conditions spontaneously isomerize into naringenin. This Trifolium subterraneum (Subterranean clover) protein is Chalcone synthase 2 (CHS2).